The following is a 142-amino-acid chain: Probable histone H2AXb (142 aa).

Positions 1-12 are enriched in gly residues; the sequence is MSSGAGSGTTKG. Residues 1–28 form a disordered region; sequence MSSGAGSGTTKGGRGKPKATKSVSRSSK. At Ser-139 the chain carries Phosphoserine; by ATM and ATR. A [ST]-Q motif motif is present at residues 139–140; it reads SQ.

This sequence belongs to the histone H2A family. The nucleosome is a histone octamer containing two molecules each of H2A, H2B, H3 and H4 assembled in one H3-H4 heterotetramer and two H2A-H2B heterodimers. The octamer wraps approximately 147 bp of DNA. Interacts with numerous proteins required for DNA damage signaling and repair when phosphorylated on Ser-139. Phosphorylated to form H2AXS139ph (gamma-H2AX) in response to DNA double strand breaks (DSBs) generated by exogenous genotoxic agents and by stalled replication forks, and may also occur during meiotic recombination events. Phosphorylation can extend up to several thousand nucleosomes from the actual site of the DSB and may mark the surrounding chromatin for recruitment of proteins required for DNA damage signaling and repair. Widespread phosphorylation may also serve to amplify the damage signal or aid repair of persistent lesions. H2AXS139ph in response to ionizing radiation is mediated by ATM while defects in DNA replication induce H2AXS139ph subsequent to activation of ATR. Dephosphorylation of H2AXS139ph by PP2A is required for DNA DSB repair. As to expression, expressed in meristems and dividing cells.

Its subcellular location is the nucleus. It localises to the chromosome. Variant histone H2A which replaces conventional H2A in a subset of nucleosomes. Nucleosomes wrap and compact DNA into chromatin, limiting DNA accessibility to the cellular machineries which require DNA as a template. Histones thereby play a central role in transcription regulation, DNA repair, DNA replication and chromosomal stability. DNA accessibility is regulated via a complex set of post-translational modifications of histones, also called histone code, and nucleosome remodeling. Required for checkpoint-mediated arrest of cell cycle progression in response to low doses of ionizing radiation and for efficient repair of DNA double strand breaks (DSBs) specifically when modified by C-terminal phosphorylation. This Arabidopsis thaliana (Mouse-ear cress) protein is Probable histone H2AXb.